Reading from the N-terminus, the 376-residue chain is Protein-tyrosine sulfotransferase 2 (376 aa).

Topologically, residues 1–8 are cytoplasmic; the sequence is MRLSVRKV. The chain crosses the membrane as a helical; Signal-anchor for type II membrane protein span at residues 9–25; sequence LLAAGCALALVLAVQLG. The Lumenal segment spans residues 26–376; the sequence is QQVLECRAVL…NSTSPHLGSS (351 aa). Position 77–81 (77–81) interacts with 3'-phosphoadenylyl sulfate; the sequence is RSGTT. Cysteines 95 and 155 form a disulfide. E98 functions as the Proton donor/acceptor in the catalytic mechanism. Residues 100-104 form an interaction with peptide substrate region; that stretch reads RIIPR. 3'-phosphoadenylyl sulfate-binding residues include R182, S190, and R194. A disulfide bond links C224 and C232. Residues Y237, 284 to 293, and K299 each bind 3'-phosphoadenylyl sulfate; that span reads STDQVIKPVN. N342 and N367 each carry an N-linked (GlcNAc...) asparagine glycan.

Belongs to the protein sulfotransferase family. In terms of assembly, homodimer. Can also form heterodimers with TPST1. N-glycosylated. In terms of tissue distribution, widely expressed.

The protein localises to the golgi apparatus membrane. The catalysed reaction is L-tyrosyl-[protein] + 3'-phosphoadenylyl sulfate = O-sulfo-L-tyrosine-[protein] + adenosine 3',5'-bisphosphate + H(+). Functionally, catalyzes the O-sulfation of tyrosine residues within acidic motifs of polypeptides, using 3'-phosphoadenylyl sulfate (PAPS) as cosubstrate. The protein is Protein-tyrosine sulfotransferase 2 (Tpst2) of Mus musculus (Mouse).